The following is a 426-amino-acid chain: Enolase (426 aa).

Residue Q163 participates in (2R)-2-phosphoglycerate binding. E205 serves as the catalytic Proton donor. Mg(2+) is bound by residues D242, E286, and D313. (2R)-2-phosphoglycerate contacts are provided by K338, R367, S368, and K389. K338 (proton acceptor) is an active-site residue.

It belongs to the enolase family. Requires Mg(2+) as cofactor.

The protein resides in the cytoplasm. It is found in the secreted. Its subcellular location is the cell surface. The enzyme catalyses (2R)-2-phosphoglycerate = phosphoenolpyruvate + H2O. The protein operates within carbohydrate degradation; glycolysis; pyruvate from D-glyceraldehyde 3-phosphate: step 4/5. Catalyzes the reversible conversion of 2-phosphoglycerate (2-PG) into phosphoenolpyruvate (PEP). It is essential for the degradation of carbohydrates via glycolysis. The polypeptide is Enolase (Helicobacter pylori (strain HPAG1)).